Reading from the N-terminus, the 340-residue chain is Protein phosphatase PTC7 homolog fig (340 aa).

Residues 58-314 form the PPM-type phosphatase domain; that stretch reads RAQAETIQAP…DDITVVLASV (257 aa). D90, G91, and D236 together coordinate Mn(2+).

Belongs to the PP2C family. Requires Mg(2+) as cofactor. Mn(2+) serves as cofactor.

It carries out the reaction O-phospho-L-seryl-[protein] + H2O = L-seryl-[protein] + phosphate. It catalyses the reaction O-phospho-L-threonyl-[protein] + H2O = L-threonyl-[protein] + phosphate. The polypeptide is Protein phosphatase PTC7 homolog fig (Drosophila pseudoobscura pseudoobscura (Fruit fly)).